Here is a 248-residue protein sequence, read N- to C-terminus: 3-deoxy-manno-octulosonate cytidylyltransferase (248 aa).

Belongs to the KdsB family.

The protein resides in the cytoplasm. The enzyme catalyses 3-deoxy-alpha-D-manno-oct-2-ulosonate + CTP = CMP-3-deoxy-beta-D-manno-octulosonate + diphosphate. The protein operates within nucleotide-sugar biosynthesis; CMP-3-deoxy-D-manno-octulosonate biosynthesis; CMP-3-deoxy-D-manno-octulosonate from 3-deoxy-D-manno-octulosonate and CTP: step 1/1. It functions in the pathway bacterial outer membrane biogenesis; lipopolysaccharide biosynthesis. Functionally, activates KDO (a required 8-carbon sugar) for incorporation into bacterial lipopolysaccharide in Gram-negative bacteria. This Escherichia coli O139:H28 (strain E24377A / ETEC) protein is 3-deoxy-manno-octulosonate cytidylyltransferase.